Reading from the N-terminus, the 131-residue chain is Small ribosomal subunit protein uS8 (131 aa).

It belongs to the universal ribosomal protein uS8 family. As to quaternary structure, part of the 30S ribosomal subunit. Contacts proteins S5 and S12.

Functionally, one of the primary rRNA binding proteins, it binds directly to 16S rRNA central domain where it helps coordinate assembly of the platform of the 30S subunit. This is Small ribosomal subunit protein uS8 from Legionella pneumophila subsp. pneumophila (strain Philadelphia 1 / ATCC 33152 / DSM 7513).